We begin with the raw amino-acid sequence, 226 residues long: Thioredoxin domain-containing protein 9 (226 aa).

The Thioredoxin domain occupies 52-180; it reads LEALKKAQQQ…TTETLEWRLG (129 aa). Phosphoserine occurs at positions 188, 221, and 223.

Forms ternary complexes with the chaperonin TCP1 complex, spanning the cylindrical chaperonin cavity and contacting at least 2 subunits.

The protein resides in the cytoplasm. It localises to the nucleus. Its subcellular location is the cytoskeleton. The protein localises to the microtubule organizing center. It is found in the centrosome. The protein resides in the midbody. Functionally, significantly diminishes the chaperonin TCP1 complex ATPase activity, thus negatively impacts protein folding, including that of actin or tubulin. This is Thioredoxin domain-containing protein 9 (TXNDC9) from Bos taurus (Bovine).